We begin with the raw amino-acid sequence, 276 residues long: MYKERSGGGGGGSSRSEILGGAIDRKRINDALNKKLEKSSTSTTTSRVFSSKDKDPFSFTSTKTQLPDVESETDSEGSDVSGSEGDDTSWISWFCNLRGNDFFCEVDEDYIQDDFNLCGLSGQVPYYDYALDLILDVDASNSEMFTDEQHEMVESAAEMLYGLIHVRYILTTKGMAAMTEKYKNCDFGRCPRVFCCGQSCLPVGQSDIPRSSTVKIYCPKCEDISYPRSKFQGNIDGAYFGTTFPHLFLMTYGNLKPQKPTQSYVPKIFGFKVHKP.

Disordered stretches follow at residues 1-22 and 34-86; these read MYKE…LGGA and KKLE…SEGD.

This sequence belongs to the casein kinase 2 subunit beta family. In terms of assembly, heterotetramer of two catalytic alpha subunits and two regulatory beta subunits. Interacts with CCA1. Interacts with LHY. In terms of processing, phosphorylated by alpha subunit.

It localises to the cytoplasm. The protein localises to the cytosol. The protein resides in the nucleus. Plays a complex role in regulating the basal catalytic activity of the alpha subunit. The tetrameric holoenzyme CK2, composed of two alpha and two beta subunits, phosphorylates the transcription factor PIF1 after an exposure to light, resulting in a proteasome-dependent degradation of PIF1 and promotion of photomorphogenesis. CK2 phosphorylates translation initiation factors. May participate in the regulation of the initiation of translation. Stimulates the binding of CCA1 to promoters. This chain is Casein kinase II subunit beta-3 (CKB3), found in Arabidopsis thaliana (Mouse-ear cress).